Consider the following 246-residue polypeptide: Sulfate transporter CysZ (246 aa).

4 consecutive transmembrane segments (helical) span residues 24-44 (LFVLIPLSINLLVFALLIGFA), 69-89 (IVWPLFVLLVLVIVFFTFTMV), 148-168 (LLVLSFVPGVNLVATPLWILF), and 214-234 (LLIPLVNLVMMPAAVAGATLF).

It belongs to the CysZ family.

The protein resides in the cell inner membrane. High affinity, high specificity proton-dependent sulfate transporter, which mediates sulfate uptake. Provides the sulfur source for the cysteine synthesis pathway. The polypeptide is Sulfate transporter CysZ (Pseudomonas paraeruginosa (strain DSM 24068 / PA7) (Pseudomonas aeruginosa (strain PA7))).